The sequence spans 246 residues: MLLIPAIDLKDGRCVRLRQGDLDDATVFSEDPAAMASHWLDLGARRLHLVDLNGAVAGKPKNEAPIKAILQAVGDDIPVQIGGGIRDLDTIERYLDAGISYVIIGTAAVKNPGFLQDACGAFPGQIIVGLDARDGKVATDGWSKLTRHDVLDLAKKFEDYGCEAIIYTDIGRDGMLSGVNVDATVRLAQHVRIPVFASGGIAGLSDIEALCAVEDDGVEGAILGRSIYEGALDFQAAQARADELAK.

Aspartate 8 functions as the Proton acceptor in the catalytic mechanism. Aspartate 131 (proton donor) is an active-site residue.

The protein belongs to the HisA/HisF family.

The protein localises to the cytoplasm. It carries out the reaction 1-(5-phospho-beta-D-ribosyl)-5-[(5-phospho-beta-D-ribosylamino)methylideneamino]imidazole-4-carboxamide = 5-[(5-phospho-1-deoxy-D-ribulos-1-ylimino)methylamino]-1-(5-phospho-beta-D-ribosyl)imidazole-4-carboxamide. Its pathway is amino-acid biosynthesis; L-histidine biosynthesis; L-histidine from 5-phospho-alpha-D-ribose 1-diphosphate: step 4/9. This Bordetella bronchiseptica (strain ATCC BAA-588 / NCTC 13252 / RB50) (Alcaligenes bronchisepticus) protein is 1-(5-phosphoribosyl)-5-[(5-phosphoribosylamino)methylideneamino] imidazole-4-carboxamide isomerase.